Consider the following 797-residue polypeptide: Plakophilin-3 (797 aa).

Residues 56-82 form a disordered region; that stretch reads QLGQQPRHNGAAEPEPEAETARGTSRG. Position 81 is an omega-N-methylarginine (Arg-81). A phosphoserine mark is found at Ser-123, Ser-180, and Ser-183. Tyr-195 carries the post-translational modification Phosphotyrosine; by SRC. 2 positions are modified to phosphoserine: Ser-238 and Ser-240. Thr-250 bears the Phosphothreonine mark. At Arg-261 the chain carries Omega-N-methylarginine. The required for interaction with SFN stretch occupies residues 283–288; sequence SLSLSL. A phosphoserine mark is found at Ser-285, Ser-313, Ser-314, and Ser-331. The tract at residues 294–724 is required for interaction with GSK3B; that stretch reads LPDVHGFNSY…AEVLVNIIAV (431 aa). ARM repeat units follow at residues 305 to 348, 351 to 390, 393 to 432, 449 to 487, 491 to 536, 596 to 637, 645 to 684, and 689 to 730; these read SHRT…HKCY, AAAK…NLIY, ADNK…NLSS, TDLV…NLSS, ATRQ…NLSY, PKGL…NITA, VLSR…NLSR, and KDEM…NLVV. The tract at residues 516 to 797 is required for binding to PKP2 mRNA; that stretch reads AGKCEDKSVE…GYRKEDFLGP (282 aa).

Belongs to the beta-catenin family. As to quaternary structure, found in a complex composed of CDH1, RAP1A and PKP3; PKP3 acts as a scaffold protein within the complex, the complex is required for CDH1 localization to mature desmosome cell junctions. Interacts with FXR1; the interaction facilitates the binding of PKP3 to PKP2 mRNA. Interacts (via ARM repeats) with GSK3B; the interaction may be involved in PKP3 protein degradation. Interacts with hyperphosphorylated and hypophosphorylated RB1; the interaction inhibits RB1 interaction with and repression of the transcription factor E2F1, potentially via sequestering RB1 to the cytoplasm. Interacts with CDKN1A; the interaction sequesters CDKN1A to the cytoplasm thereby repressing its role as an inhibitor of CDK4- and CDK6-driven RB1 phosphorylation. Interacts (via N-terminus) with SFN; the interaction maintains the cytoplasmic pool of PKP3, facilitates PKP3 exchange at desmosomes and restricts PKP3 localization to existing desmosome cell junctions. Interacts (via N-terminus) with JUP; the interaction is required for PKP3 localization to desmosome cell-cell junctions. Post-translationally, phosphorylated at Ser-285 when localized to the cytoplasm, PKP3 at desmosome cell junctions is not phosphorylated. Phosphorylation at Try-195 by SRC is induced by reactive oxygen species and potentially acts as a release mechanism from desmosome cell-cell junctions. In terms of tissue distribution, expressed in the epidermis of the skin, in squamous non-cornifying epithelial cells in the vagina, single layer epithelia of the duodenum and pancreas acini and non-epithelial dendritic reticulum cells of lymph node follicles (at protein level). As to expression, expressed in the oral cavity mucosa, epidermis and small intestine epithelium (at protein level). Expressed in the oral cavity mucosa and epithelial cells of the crypts and villi in the small intestine (at protein level). Expressed in the epidermis with more abundant expression found in the basal and low spinous cells (at protein level).

The protein resides in the nucleus. It is found in the cell junction. It localises to the desmosome. Its subcellular location is the cytoplasm. The protein localises to the cell membrane. The protein resides in the adherens junction. Its function is as follows. A component of desmosome cell-cell junctions which are required for positive regulation of cellular adhesion. Required for the localization of DSG2, DSP and PKP2 to mature desmosome junctions. May also play a role in the maintenance of DSG3 protein abundance in keratinocytes. Required for the formation of DSP-containing desmosome precursors in the cytoplasm during desmosome assembly. Also regulates the accumulation of CDH1 to mature desmosome junctions, via cAMP-dependent signaling and its interaction with activated RAP1A. Positively regulates the stabilization of PKP2 mRNA and therefore protein abundance, via its interaction with FXR1, may also regulate the protein abundance of DSP via the same mechanism. May also regulate the protein abundance of the desmosome component PKP1. Required for the organization of desmosome junctions at intercellular borders between basal keratinocytes of the epidermis, as a result plays a role in maintenance of the dermal barrier and regulation of the dermal inflammatory response. Required during epidermal keratinocyte differentiation for cell adherence at tricellular cell-cell contacts, via regulation of the timely formation of adherens junctions and desmosomes in a calcium-dependent manner, and may also play a role in the organization of the intracellular actin fiber belt. Acts as a negative regulator of the inflammatory response in hematopoietic cells of the skin and intestine, via modulation of proinflammatory cytokine production. Important for epithelial barrier maintenance in the intestine to reduce intestinal permeability, thereby plays a role in protection from intestinal-derived endotoxemia. Required for the development of hair follicles, via a role in the regulation of inner root sheaf length, correct alignment and anterior-posterior polarity of hair follicles. Promotes proliferation and cell-cycle G1/S phase transition of keratinocytes. Promotes E2F1-driven transcription of G1/S phase promoting genes by acting to release E2F1 from its inhibitory interaction with RB1, via sequestering RB1 and CDKN1A to the cytoplasm and thereby increasing CDK4- and CDK6-driven phosphorylation of RB1. May act as a scaffold protein to facilitate MAPK phosphorylation of RPS6KA protein family members and subsequently promote downstream EGFR signaling. May play a role in the positive regulation of transcription of Wnt-mediated TCF-responsive target genes. This is Plakophilin-3 (PKP3) from Homo sapiens (Human).